The following is a 495-amino-acid chain: Trigger factor (495 aa).

A PPIase FKBP-type domain is found at 169–254 (GDRVAMDYVG…VKDVAAPGAV (86 aa)). A disordered region spans residues 441–495 (LAEDEGEAKAETKKAAPKKKAAAKTEAAEAGEGEEAAAPKKKAAPKKKAADESAE).

It belongs to the FKBP-type PPIase family. Tig subfamily.

It localises to the cytoplasm. The catalysed reaction is [protein]-peptidylproline (omega=180) = [protein]-peptidylproline (omega=0). Its function is as follows. Involved in protein export. Acts as a chaperone by maintaining the newly synthesized protein in an open conformation. Functions as a peptidyl-prolyl cis-trans isomerase. This chain is Trigger factor, found in Rhizobium etli (strain CIAT 652).